The sequence spans 106 residues: Small ribosomal subunit protein uS10 (106 aa).

This sequence belongs to the universal ribosomal protein uS10 family. In terms of assembly, part of the 30S ribosomal subunit.

Involved in the binding of tRNA to the ribosomes. The protein is Small ribosomal subunit protein uS10 of Synechococcus sp. (strain CC9902).